Consider the following 143-residue polypeptide: MNATENFQIIHRYLARQHVLTLCTATGDDVWCANCFYVFNADEIAFWFMTELHTRHGEMMQVNPQVAGTIAGQIRHIAQIKGIQFKGEVIRLEGEKDKVARARYCRRFPVSIAVKTPIWQLNLNEIKMTDNTLGFGKKICWQR.

The protein belongs to the UPF0306 family.

The sequence is that of UPF0306 protein plu4501 from Photorhabdus laumondii subsp. laumondii (strain DSM 15139 / CIP 105565 / TT01) (Photorhabdus luminescens subsp. laumondii).